A 98-amino-acid chain; its full sequence is NADH-ubiquinone oxidoreductase chain 4L (98 aa).

Helical transmembrane passes span 1–21 (MSMV…GLLM), 29–49 (SLLC…MVVL), and 61–81 (IILL…LVMV).

Belongs to the complex I subunit 4L family. As to quaternary structure, core subunit of respiratory chain NADH dehydrogenase (Complex I) which is composed of 45 different subunits.

The protein localises to the mitochondrion inner membrane. The enzyme catalyses a ubiquinone + NADH + 5 H(+)(in) = a ubiquinol + NAD(+) + 4 H(+)(out). Functionally, core subunit of the mitochondrial membrane respiratory chain NADH dehydrogenase (Complex I) which catalyzes electron transfer from NADH through the respiratory chain, using ubiquinone as an electron acceptor. Part of the enzyme membrane arm which is embedded in the lipid bilayer and involved in proton translocation. This is NADH-ubiquinone oxidoreductase chain 4L (MT-ND4L) from Acinonyx jubatus (Cheetah).